The sequence spans 103 residues: UPF0145 protein HH_1800 (103 aa).

Belongs to the UPF0145 family.

The chain is UPF0145 protein HH_1800 from Helicobacter hepaticus (strain ATCC 51449 / 3B1).